A 126-amino-acid chain; its full sequence is Translation initiation factor 5A (126 aa).

Residue Lys-36 is modified to Hypusine.

The protein belongs to the eIF-5A family.

It is found in the cytoplasm. Functions by promoting the formation of the first peptide bond. The protein is Translation initiation factor 5A of Haloarcula marismortui (strain ATCC 43049 / DSM 3752 / JCM 8966 / VKM B-1809) (Halobacterium marismortui).